We begin with the raw amino-acid sequence, 194 residues long: Small ribosomal subunit protein uS4c (194 aa).

The region spanning 82–143 is the S4 RNA-binding domain; it reads MRLDNILFRL…KQRSKALIQN (62 aa).

The protein belongs to the universal ribosomal protein uS4 family. In terms of assembly, part of the 30S ribosomal subunit. Contacts protein S5. The interaction surface between S4 and S5 is involved in control of translational fidelity.

The protein resides in the plastid. The protein localises to the chloroplast. Its function is as follows. One of the primary rRNA binding proteins, it binds directly to 16S rRNA where it nucleates assembly of the body of the 30S subunit. In terms of biological role, with S5 and S12 plays an important role in translational accuracy. The polypeptide is Small ribosomal subunit protein uS4c (rps4) (Sisyrinchium striatum (Satin flower)).